The chain runs to 294 residues: MNFILFIFIPGVFSLKSSTLKPTIEALPNVLPLNEDVNKQEEKNEDHTPNYAPANEKNGNYYKDIKQYVFTTQNPNGTESEISVRATTDLNFALKNDKTVNATTYEKSTIEEETTTSEPSHKNIQRSTPNVPAFWTMLAKAINGTAVVMDDKDQLFHPIPESDVNATQGENQPDLEDLKIKIMLGISLMTLLLFVVLLAFCSATLYKLRHLSYKSCESQYSVNPELATMSYFHPSEGVSDTSFSKSAESSTFLGTTSSDMRRSGTRTSESKIMTDIISIGSDNEMHENDESVTR.

The N-terminal stretch at 1-14 (MNFILFIFIPGVFS) is a signal peptide. Topologically, residues 15–181 (LKSSTLKPTI…QPDLEDLKIK (167 aa)) are vesicular. N-linked (GlcNAc...) asparagine glycosylation occurs at Asn76. The interval 107–126 (KSTIEEETTTSEPSHKNIQR) is disordered. Residue Asn143 is glycosylated (N-linked (GlcNAc...) asparagine). Residues 182–202 (IMLGISLMTLLLFVVLLAFCS) traverse the membrane as a helical segment. The Cytoplasmic portion of the chain corresponds to 203–294 (ATLYKLRHLS…MHENDESVTR (92 aa)).

Interacts with SNAP25. In terms of processing, highly N- and O-glycosylated; contains sialic acid. In terms of tissue distribution, isoform 1 is highly expressed in testis. Isoform 2 is expressed at low levels in skin and blood.

Its subcellular location is the cytoplasmic vesicle. The protein resides in the secretory vesicle. It is found in the acrosome membrane. It localises to the acrosome inner membrane. The protein localises to the acrosome outer membrane. In terms of biological role, acrosomal membrane-anchored protein involved in the process of fertilization and in acrosome biogenesis. The chain is Equatorin (EQTN) from Homo sapiens (Human).